A 138-amino-acid polypeptide reads, in one-letter code: uncharacterized protein (138 aa).

This sequence to phage 186 CP81.

This is an uncharacterized protein from Salmonella typhimurium (strain LT2 / SGSC1412 / ATCC 700720).